Reading from the N-terminus, the 101-residue chain is uncharacterized protein (101 aa).

The next 2 helical transmembrane spans lie at 35-55 (LWTM…LIII) and 66-86 (FLFF…TLLF).

It localises to the membrane. This is an uncharacterized protein from Saccharomyces cerevisiae (strain ATCC 204508 / S288c) (Baker's yeast).